A 298-amino-acid chain; its full sequence is uncharacterized protein (298 aa).

The 228-residue stretch at 2–229 (LTIDHVTKTF…FGKKNVTIHS (228 aa)) folds into the ABC transporter domain. 34-41 (GANGAGKT) lines the ATP pocket.

Belongs to the ABC transporter superfamily.

It localises to the cell membrane. This is an uncharacterized protein from Bacillus subtilis (strain 168).